Here is a 252-residue protein sequence, read N- to C-terminus: Flagellar brake protein YcgR (252 aa).

The region spanning 123–238 (QRREFYRVPT…TLATVQKYIT (116 aa)) is the PilZ domain.

The protein belongs to the YcgR family. In terms of assembly, monomer. Interacts with the flagellar basal bodies.

It is found in the bacterial flagellum basal body. In terms of biological role, acts as a flagellar brake, regulating swimming and swarming in a bis-(3'-5') cyclic diguanylic acid (c-di-GMP)-dependent manner. Binds 1 c-di-GMP dimer per subunit. Increasing levels of c-di-GMP lead to decreased motility. The polypeptide is Flagellar brake protein YcgR (Janthinobacterium sp. (strain Marseille) (Minibacterium massiliensis)).